Here is a 393-residue protein sequence, read N- to C-terminus: Probable acetyl-CoA acetyltransferase (393 aa).

The active-site Acyl-thioester intermediate is the Cys-88. Residues His-348 and Cys-378 each act as proton acceptor in the active site.

It belongs to the thiolase-like superfamily. Thiolase family.

The protein resides in the cytoplasm. The enzyme catalyses 2 acetyl-CoA = acetoacetyl-CoA + CoA. The protein is Probable acetyl-CoA acetyltransferase (yqeF) of Escherichia coli (strain K12).